The chain runs to 557 residues: Urocanate hydratase (557 aa).

NAD(+) contacts are provided by residues 52-53 (GG), Gln130, 176-178 (GMG), Glu196, Arg201, 242-243 (NA), 263-267 (QTSAH), 273-274 (YL), and Tyr322. Cys410 is a catalytic residue. Gly492 serves as a coordination point for NAD(+).

It belongs to the urocanase family. NAD(+) is required as a cofactor.

The protein resides in the cytoplasm. The catalysed reaction is 4-imidazolone-5-propanoate = trans-urocanate + H2O. It participates in amino-acid degradation; L-histidine degradation into L-glutamate; N-formimidoyl-L-glutamate from L-histidine: step 2/3. Catalyzes the conversion of urocanate to 4-imidazolone-5-propionate. The sequence is that of Urocanate hydratase from Pseudoalteromonas translucida (strain TAC 125).